A 290-amino-acid chain; its full sequence is Pyridoxal 5'-phosphate synthase subunit PdxS (290 aa).

Asp-22 provides a ligand contact to D-ribose 5-phosphate. Lys-79 (schiff-base intermediate with D-ribose 5-phosphate) is an active-site residue. Residue Gly-151 coordinates D-ribose 5-phosphate. Arg-163 is a binding site for D-glyceraldehyde 3-phosphate. Residues Gly-212 and 233 to 234 contribute to the D-ribose 5-phosphate site; that span reads GS.

This sequence belongs to the PdxS/SNZ family. In the presence of PdxT, forms a dodecamer of heterodimers.

The catalysed reaction is aldehydo-D-ribose 5-phosphate + D-glyceraldehyde 3-phosphate + L-glutamine = pyridoxal 5'-phosphate + L-glutamate + phosphate + 3 H2O + H(+). Its pathway is cofactor biosynthesis; pyridoxal 5'-phosphate biosynthesis. Catalyzes the formation of pyridoxal 5'-phosphate from ribose 5-phosphate (RBP), glyceraldehyde 3-phosphate (G3P) and ammonia. The ammonia is provided by the PdxT subunit. Can also use ribulose 5-phosphate and dihydroxyacetone phosphate as substrates, resulting from enzyme-catalyzed isomerization of RBP and G3P, respectively. In Clostridium botulinum (strain Loch Maree / Type A3), this protein is Pyridoxal 5'-phosphate synthase subunit PdxS.